A 156-amino-acid chain; its full sequence is 6,7-dimethyl-8-ribityllumazine synthase (156 aa).

Residues phenylalanine 22, 57 to 59 (AYE), and 81 to 83 (TVI) contribute to the 5-amino-6-(D-ribitylamino)uracil site. 86-87 (GT) provides a ligand contact to (2S)-2-hydroxy-3-oxobutyl phosphate. Histidine 89 acts as the Proton donor in catalysis. Phenylalanine 114 is a 5-amino-6-(D-ribitylamino)uracil binding site. Arginine 128 provides a ligand contact to (2S)-2-hydroxy-3-oxobutyl phosphate.

The protein belongs to the DMRL synthase family. As to quaternary structure, forms an icosahedral capsid composed of 60 subunits, arranged as a dodecamer of pentamers.

The enzyme catalyses (2S)-2-hydroxy-3-oxobutyl phosphate + 5-amino-6-(D-ribitylamino)uracil = 6,7-dimethyl-8-(1-D-ribityl)lumazine + phosphate + 2 H2O + H(+). The protein operates within cofactor biosynthesis; riboflavin biosynthesis; riboflavin from 2-hydroxy-3-oxobutyl phosphate and 5-amino-6-(D-ribitylamino)uracil: step 1/2. Functionally, catalyzes the formation of 6,7-dimethyl-8-ribityllumazine by condensation of 5-amino-6-(D-ribitylamino)uracil with 3,4-dihydroxy-2-butanone 4-phosphate. This is the penultimate step in the biosynthesis of riboflavin. This Proteus mirabilis (strain HI4320) protein is 6,7-dimethyl-8-ribityllumazine synthase.